Consider the following 83-residue polypeptide: Host transcription reprogramming factor 9 (83 aa).

A signal peptide spans methionine 1–alanine 19. Residues tyrosine 54–histidine 77 form a C2H2-type zinc finger.

It is found in the secreted. The protein localises to the host nucleus. Its function is as follows. Probable secreted effector that translocates into the nuclei of host cells to reprogram the expression of targeted genes by binding on effector binding elements in rice. The chain is Host transcription reprogramming factor 9 from Pyricularia oryzae (strain 70-15 / ATCC MYA-4617 / FGSC 8958) (Rice blast fungus).